A 216-amino-acid polypeptide reads, in one-letter code: MVSFSSLFVAACAAVTAFALPNELEKRAITSNEQGTNNGYFYSFWTNGGGSVSYNNGAAGQYSVNWKDCGSFTSGKGWATGSARNINFSGSFNPSGNAYLAVYGWTTSPLVEYYIMENYGEYNPGSSMAHKGTVTSDGSVYDIYAHQQVNQPSIVGTATFNQYWSIRRNKRSSGTVTTANHFNAWSRLGMGLGSHNYQIVNTEGYQSSGSASITVS.

Residues 1–27 (MVSFSSLFVAACAAVTAFALPNELEKR) form the signal peptide. The GH11 domain occupies 28 to 216 (AITSNEQGTN…SSGSASITVS (189 aa)). N-linked (GlcNAc...) asparagine glycosylation is present at N87. The Nucleophile role is filled by E112. E203 (proton donor) is an active-site residue.

This sequence belongs to the glycosyl hydrolase 11 (cellulase G) family.

The protein localises to the secreted. The catalysed reaction is Endohydrolysis of (1-&gt;4)-beta-D-xylosidic linkages in xylans.. The protein operates within glycan degradation; xylan degradation. Its function is as follows. Endo-1,4-beta-xylanase involved in the hydrolysis of xylan, a major structural heterogeneous polysaccharide found in plant biomass representing the second most abundant polysaccharide in the biosphere, after cellulose. The protein is Endo-1,4-beta-xylanase 2 (xyn2) of Rhizopus oryzae (Mucormycosis agent).